The sequence spans 166 residues: Small ribosomal subunit protein uS3m (166 aa).

A mitochondrion-targeting transit peptide spans 1–25 (MLRSLQHVESHINQCRRISTTSTLL).

Belongs to the universal ribosomal protein uS3 family. As to quaternary structure, component of the mitochondrial ribosome small subunit (28S) which comprises a 12S rRNA and about 30 distinct proteins.

Its subcellular location is the mitochondrion. The chain is Small ribosomal subunit protein uS3m (mrps-24) from Caenorhabditis briggsae.